Here is a 287-residue protein sequence, read N- to C-terminus: Cbb3-type cytochrome c oxidase subunit FixPc (287 aa).

Residues 1–36 lie on the Cytoplasmic side of the membrane; the sequence is MSEKHIDEFSGVETTGHEWDGIRELNNPMPRWWVWT. The chain crosses the membrane as a helical span at residues 37–57; that stretch reads FYATIVWALGYAIAYPAIPMI. The Periplasmic segment spans residues 58–287; sequence TDATKGMLGF…IFVHSLGGGT (230 aa). 2 Cytochrome c domains span residues 108–196 and 203–284; these read FAIA…WGLT and GLAE…HSLG. Positions 121, 124, 125, 173, 216, 219, 220, and 261 each coordinate heme c.

Belongs to the CcoP / FixP family. Component of the cbb3-type cytochrome c oxidase at least composed of FixN, FixO, FixQ and FixP. The cofactor is heme c.

The protein localises to the cell inner membrane. It functions in the pathway energy metabolism; oxidative phosphorylation. In terms of biological role, C-type cytochrome. Part of the cbb3-type cytochrome c oxidase complex. FixP subunit is required for transferring electrons from donor cytochrome c via its heme groups to FixO subunit. From there, electrons are shuttled to the catalytic binuclear center of FixN subunit where oxygen reduction takes place. The complex also functions as a proton pump. This Rhizobium leguminosarum bv. viciae protein is Cbb3-type cytochrome c oxidase subunit FixPc.